Reading from the N-terminus, the 471-residue chain is Glutamate--tRNA ligase (471 aa).

Positions 9–19 (PSPTGYLHVGG) match the 'HIGH' region motif. 4 residues coordinate Zn(2+): Cys98, Cys100, Cys125, and His127. Positions 237–241 (KLSKR) match the 'KMSKS' region motif. An ATP-binding site is contributed by Lys240.

Belongs to the class-I aminoacyl-tRNA synthetase family. Glutamate--tRNA ligase type 1 subfamily. As to quaternary structure, monomer. Requires Zn(2+) as cofactor.

The protein localises to the cytoplasm. The enzyme catalyses tRNA(Glu) + L-glutamate + ATP = L-glutamyl-tRNA(Glu) + AMP + diphosphate. In terms of biological role, catalyzes the attachment of glutamate to tRNA(Glu) in a two-step reaction: glutamate is first activated by ATP to form Glu-AMP and then transferred to the acceptor end of tRNA(Glu). The protein is Glutamate--tRNA ligase of Shigella boydii serotype 18 (strain CDC 3083-94 / BS512).